The primary structure comprises 187 residues: Ribosome-recycling factor (187 aa).

This sequence belongs to the RRF family.

The protein resides in the cytoplasm. Responsible for the release of ribosomes from messenger RNA at the termination of protein biosynthesis. May increase the efficiency of translation by recycling ribosomes from one round of translation to another. The sequence is that of Ribosome-recycling factor from Ruegeria pomeroyi (strain ATCC 700808 / DSM 15171 / DSS-3) (Silicibacter pomeroyi).